The chain runs to 154 residues: Endoribonuclease YbeY (154 aa).

3 residues coordinate Zn(2+): histidine 113, histidine 117, and histidine 123.

The protein belongs to the endoribonuclease YbeY family. It depends on Zn(2+) as a cofactor.

The protein resides in the cytoplasm. Single strand-specific metallo-endoribonuclease involved in late-stage 70S ribosome quality control and in maturation of the 3' terminus of the 16S rRNA. The polypeptide is Endoribonuclease YbeY (Aeromonas salmonicida (strain A449)).